A 247-amino-acid polypeptide reads, in one-letter code: Small ribosomal subunit protein uS3 (247 aa).

The KH type-2 domain maps to Ile-39 to Lys-109. The tract at residues Arg-224–Gly-247 is disordered. The span at Arg-227 to Gly-247 shows a compositional bias: basic and acidic residues.

The protein belongs to the universal ribosomal protein uS3 family. Part of the 30S ribosomal subunit. Forms a tight complex with proteins S10 and S14.

Its function is as follows. Binds the lower part of the 30S subunit head. Binds mRNA in the 70S ribosome, positioning it for translation. This chain is Small ribosomal subunit protein uS3, found in Treponema pallidum (strain Nichols).